The sequence spans 216 residues: Large ribosomal subunit protein uL3 (216 aa).

Gln-153 is modified (N5-methylglutamine).

The protein belongs to the universal ribosomal protein uL3 family. Part of the 50S ribosomal subunit. Forms a cluster with proteins L14 and L19. In terms of processing, methylated by PrmB.

In terms of biological role, one of the primary rRNA binding proteins, it binds directly near the 3'-end of the 23S rRNA, where it nucleates assembly of the 50S subunit. This chain is Large ribosomal subunit protein uL3, found in Burkholderia multivorans (strain ATCC 17616 / 249).